We begin with the raw amino-acid sequence, 328 residues long: Interleukin-12 subunit beta (328 aa).

The first 22 residues, 1–22, serve as a signal peptide directing secretion; sequence MCHQQLVISWFSLVFLASPLVA. One can recognise an Ig-like C2-type domain in the interval 23 to 106; sequence IWELKKDVYV…LSHSLLLLHK (84 aa). 3 disulfide bridges follow: Cys50-Cys90, Cys131-Cys142, and Cys170-Cys193. Asn135 carries an N-linked (GlcNAc...) asparagine glycan. Asn222 carries an N-linked (GlcNAc...) asparagine glycan. One can recognise a Fibronectin type-III domain in the interval 237–328; the sequence is PPKNLQLKPL…WSEWASVPCS (92 aa). Cys300 and Cys327 form a disulfide bridge. C-linked (Man) tryptophan glycosylation occurs at Trp319.

Belongs to the IL-12B family. In terms of assembly, heterodimer with IL12A; disulfide-linked. The heterodimer is known as interleukin IL-12. Heterodimer with IL23A; disulfide-linked. The heterodimer is known as interleukin IL-23. Also secreted as a monomer. Interacts with NBR1; this interaction promotes IL-12 secretion. Known to be C-mannosylated in the recombinant protein; it is not yet known for sure if the wild-type protein is also modified.

It localises to the secreted. Functionally, cytokine that can act as a growth factor for activated T and NK cells, enhance the lytic activity of NK/lymphokine-activated killer cells, and stimulate the production of IFN-gamma by resting PBMC. Associates with IL23A to form the IL-23 interleukin, a heterodimeric cytokine which functions in innate and adaptive immunity. IL-23 may constitute with IL-17 an acute response to infection in peripheral tissues. IL-23 binds to a heterodimeric receptor complex composed of IL12RB1 and IL23R, activates the Jak-Stat signaling cascade, stimulates memory rather than naive T-cells and promotes production of pro-inflammatory cytokines. IL-23 induces autoimmune inflammation and thus may be responsible for autoimmune inflammatory diseases and may be important for tumorigenesis. The polypeptide is Interleukin-12 subunit beta (IL12B) (Homo sapiens (Human)).